The primary structure comprises 552 residues: MAQAQLPLDTPLSLPEHPKAWKWYDYFTFNVDHKVIGIQYLVTAFIFYLIGGLMAVAMRTELATADSDFLDPNLYNAFLTNHGTIMIFLWVVPAAIGGFGNYLVPLMIGARDMAFPRLNALAFWLNPPAGALLLASFLFGGAQAGWTSYPPLSTITATTAQSMWILAIILVGTSSILGSVNFIVTIWKMKVPSMRWNQLPLFCWAMLATSLLALVSTPVLAAGLILLLFDINFGTSFYKPDAGGNVVIYQHLFWFYSHPAVYLMILPIFGIMSEVIPVHARKPIFGYQAIAYSSLAICCVGLFVWVHHMFTSGTPPWMRMFFTISTLIVAVPTGVKIFSWVATLWGGKIRLNSAMLFAIGLMSMFVLGGLSGVTLGTAPVDIHVHDTYYVVAHFHYVLFGGSVFGLYAGIYHWFPKMTGRLLDERLGILHFVLTLIGTNWTFLPMHELGLKGMPRRVAMYDPQFEPVNLICTIGAFVLAFSIIPFLINIIWSWNKGKIAGDNPWGGLTLEWTTSSPPLIENWEVLPVVTKGPYDYGIERRQESTDEDHDEQE.

The helical transmembrane segment at 35–55 (VIGIQYLVTAFIFYLIGGLMA) threads the bilayer. Histidine 82 is a binding site for Fe(II)-heme a. A run of 6 helical transmembrane segments spans residues 85-105 (IMIFLWVVPAAIGGFGNYLVP), 120-140 (ALAFWLNPPAGALLLASFLFG), 164-184 (WILAIILVGTSSILGSVNFIV), 211-231 (LLALVSTPVLAAGLILLLFDI), 252-272 (LFWFYSHPAVYLMILPIFGIM), and 284-304 (IFGYQAIAYSSLAICCVGLFV). 2 residues coordinate Cu cation: histidine 258 and tyrosine 262. A cross-link (1'-histidyl-3'-tyrosine (His-Tyr)) is located at residues 258 to 262 (HPAVY). Cu cation-binding residues include histidine 307 and histidine 308. Helical transmembrane passes span 321–341 (FFTISTLIVAVPTGVKIFSWV), 355–375 (MLFAIGLMSMFVLGGLSGVTL), 390–410 (VVAHFHYVLFGGSVFGLYAGI), 426–446 (LGILHFVLTLIGTNWTFLPMH), and 470–490 (ICTIGAFVLAFSIIPFLINII). Residue histidine 393 coordinates heme a3. Histidine 395 is a binding site for Fe(II)-heme a.

It belongs to the heme-copper respiratory oxidase family. Cu(2+) is required as a cofactor. Heme serves as cofactor.

It localises to the cell membrane. It carries out the reaction 4 Fe(II)-[cytochrome c] + O2 + 8 H(+)(in) = 4 Fe(III)-[cytochrome c] + 2 H2O + 4 H(+)(out). The protein operates within energy metabolism; oxidative phosphorylation. Its function is as follows. Cytochrome c oxidase is the component of the respiratory chain that catalyzes the reduction of oxygen to water. Subunits 1-3 form the functional core of the enzyme complex. CO I is the catalytic subunit of the enzyme. Electrons originating in cytochrome c are transferred via the copper A center of subunit 2 and heme A of subunit 1 to the bimetallic center formed by heme A3 and copper B. The polypeptide is Cytochrome c oxidase subunit 1 (ctaD) (Thermostichus vulcanus (Synechococcus vulcanus)).